The chain runs to 55 residues: ATP synthase protein 8 (55 aa).

A helical transmembrane segment spans residues 7–24; sequence NPWFFIMIISWLTYSMII. Positions 34–55 are disordered; it reads TNPPARKEPTTNTTTPWNWPWT. The segment covering 43–55 has biased composition (low complexity); sequence TTNTTTPWNWPWT.

This sequence belongs to the ATPase protein 8 family. As to quaternary structure, F-type ATPases have 2 components, CF(1) - the catalytic core - and CF(0) - the membrane proton channel.

The protein localises to the mitochondrion membrane. In terms of biological role, mitochondrial membrane ATP synthase (F(1)F(0) ATP synthase or Complex V) produces ATP from ADP in the presence of a proton gradient across the membrane which is generated by electron transport complexes of the respiratory chain. F-type ATPases consist of two structural domains, F(1) - containing the extramembraneous catalytic core and F(0) - containing the membrane proton channel, linked together by a central stalk and a peripheral stalk. During catalysis, ATP synthesis in the catalytic domain of F(1) is coupled via a rotary mechanism of the central stalk subunits to proton translocation. Part of the complex F(0) domain. Minor subunit located with subunit a in the membrane. This chain is ATP synthase protein 8 (MT-ATP8), found in Vireo altiloquus (Black-whiskered vireo).